The following is a 491-amino-acid chain: UDP-N-acetylmuramoyl-L-alanyl-D-glutamate--2,6-diaminopimelate ligase (491 aa).

UDP-N-acetyl-alpha-D-muramoyl-L-alanyl-D-glutamate is bound at residue Ser-30. 108–114 (GTNGKTT) serves as a coordination point for ATP. UDP-N-acetyl-alpha-D-muramoyl-L-alanyl-D-glutamate is bound by residues Asn-149, 150 to 151 (TT), Ser-177, Gln-183, and Arg-185. Position 217 is an N6-carboxylysine (Lys-217). Residues Arg-383, 407–410 (DNPR), Gly-458, and Glu-462 each bind meso-2,6-diaminopimelate. A Meso-diaminopimelate recognition motif motif is present at residues 407–410 (DNPR).

The protein belongs to the MurCDEF family. MurE subfamily. The cofactor is Mg(2+). In terms of processing, carboxylation is probably crucial for Mg(2+) binding and, consequently, for the gamma-phosphate positioning of ATP.

The protein resides in the cytoplasm. The enzyme catalyses UDP-N-acetyl-alpha-D-muramoyl-L-alanyl-D-glutamate + meso-2,6-diaminopimelate + ATP = UDP-N-acetyl-alpha-D-muramoyl-L-alanyl-gamma-D-glutamyl-meso-2,6-diaminopimelate + ADP + phosphate + H(+). It functions in the pathway cell wall biogenesis; peptidoglycan biosynthesis. Its function is as follows. Catalyzes the addition of meso-diaminopimelic acid to the nucleotide precursor UDP-N-acetylmuramoyl-L-alanyl-D-glutamate (UMAG) in the biosynthesis of bacterial cell-wall peptidoglycan. The protein is UDP-N-acetylmuramoyl-L-alanyl-D-glutamate--2,6-diaminopimelate ligase of Listeria monocytogenes serovar 1/2a (strain ATCC BAA-679 / EGD-e).